The chain runs to 494 residues: 3-octaprenyl-4-hydroxybenzoate carboxy-lyase (494 aa).

Asn172 serves as a coordination point for Mn(2+). Residues 175 to 177 (IYR), 189 to 191 (RWL), and 194 to 195 (RG) each bind prenylated FMN. A Mn(2+)-binding site is contributed by Glu238. The active-site Proton donor is Asp287.

It belongs to the UbiD family. Homohexamer. Requires prenylated FMN as cofactor. It depends on Mn(2+) as a cofactor.

It is found in the cell membrane. It catalyses the reaction a 4-hydroxy-3-(all-trans-polyprenyl)benzoate + H(+) = a 2-(all-trans-polyprenyl)phenol + CO2. It functions in the pathway cofactor biosynthesis; ubiquinone biosynthesis. Its function is as follows. Catalyzes the decarboxylation of 3-octaprenyl-4-hydroxy benzoate to 2-octaprenylphenol, an intermediate step in ubiquinone biosynthesis. The chain is 3-octaprenyl-4-hydroxybenzoate carboxy-lyase from Cronobacter sakazakii (strain ATCC BAA-894) (Enterobacter sakazakii).